Reading from the N-terminus, the 482-residue chain is ATP synthase subunit beta (482 aa).

161 to 168 (GGAGVGKT) serves as a coordination point for ATP.

It belongs to the ATPase alpha/beta chains family. In terms of assembly, F-type ATPases have 2 components, CF(1) - the catalytic core - and CF(0) - the membrane proton channel. CF(1) has five subunits: alpha(3), beta(3), gamma(1), delta(1), epsilon(1). CF(0) has four main subunits: a(1), b(1), b'(1) and c(9-12).

The protein localises to the cellular thylakoid membrane. The enzyme catalyses ATP + H2O + 4 H(+)(in) = ADP + phosphate + 5 H(+)(out). In terms of biological role, produces ATP from ADP in the presence of a proton gradient across the membrane. The catalytic sites are hosted primarily by the beta subunits. This chain is ATP synthase subunit beta, found in Microcystis aeruginosa (strain NIES-843 / IAM M-2473).